The following is a 342-amino-acid chain: DNA primase (342 aa).

The Zn(2+) site is built by Cys-37, Cys-40, Cys-65, and Cys-68.

Belongs to the Tequatrovirus DNA primase family. In terms of assembly, monomer. Hexamer. Interacts with the DnaB-like replicative helicase; this interaction forms the active primosome complex, which is composed of 6 helicase and 1 primase subunits and expresses full helicase and primase activities. Interacts (via C-terminus) with the single-stranded DNA-binding protein. Part of the replicase complex that includes the DNA polymerase, the polymerase clamp, the clamp loader complex, the single-stranded DNA binding protein, the primase, the DnaB-like replicative helicase and the helicase assembly factor.

In terms of biological role, synthesizes short RNA primers for the lagging strand DNA replication. The primase synthesizes short RNA primers on the lagging strand that the polymerase elongates using dNTPs. Recognizes two trinucleotide sequences 5'-GTT-3' and 5'-GCT-3' in vitro, but uses only the first as the priming site in vivo. This chain is DNA primase (61), found in Escherichia coli (Bacteriophage T4).